The sequence spans 133 residues: Small ribosomal subunit protein uS9 (133 aa).

The segment at 111–133 (PRRSESKKFGGPGARARKQKSYR) is disordered.

This sequence belongs to the universal ribosomal protein uS9 family.

The sequence is that of Small ribosomal subunit protein uS9 from Methanosphaera stadtmanae (strain ATCC 43021 / DSM 3091 / JCM 11832 / MCB-3).